The following is a 183-amino-acid chain: MSVRDIRLLGDPVLRTVADPVATFDRELRRLVDDLADTMRDAGGVGLAAPQLGVSLRIFTYLDDSDEVGHLINPVLGPFSEEMMDGEEGCLSLPGLAFDLRRPERVLAVGQNSHGDPVTVEGSGILSRCLQHETDHLDGILFIDRLDKETKRAAMKAIREAEWSNEPKPAVKVSPHPLFGRGR.

2 residues coordinate Fe cation: cysteine 90 and histidine 132. Residue glutamate 133 is part of the active site. Histidine 136 lines the Fe cation pocket.

Belongs to the polypeptide deformylase family. The cofactor is Fe(2+).

It catalyses the reaction N-terminal N-formyl-L-methionyl-[peptide] + H2O = N-terminal L-methionyl-[peptide] + formate. Functionally, removes the formyl group from the N-terminal Met of newly synthesized proteins. Requires at least a dipeptide for an efficient rate of reaction. N-terminal L-methionine is a prerequisite for activity but the enzyme has broad specificity at other positions. This Parafrankia sp. (strain EAN1pec) protein is Peptide deformylase.